Consider the following 346-residue polypeptide: E3 ubiquitin-protein ligase ARK2C (346 aa).

Disordered regions lie at residues 23–76 (PFQR…QHSG) and 267–288 (PHKY…GEES). Residues 266–268 (FPH) form a ubiquitin binding region. Residues 275–284 (PQDGKGKKDE) are compositionally biased toward basic and acidic residues. Cys-294 and Cys-297 together coordinate Zn(2+). The RING-type; atypical zinc-finger motif lies at 294-335 (CTICLSMLEDGEDVRRLPCMHLFHQLCVDQWLAMSKKCPICR). The interval 309–313 (RLPCM) is ubiquitin binding. Residues His-317 and Cys-320 each coordinate Zn(2+).

The protein belongs to the Arkadia family. In terms of assembly, monomer; binding to the ubiquitin-conjugating enzyme E2 does not trigger homodimerization.

Its subcellular location is the nucleus. It catalyses the reaction S-ubiquitinyl-[E2 ubiquitin-conjugating enzyme]-L-cysteine + [acceptor protein]-L-lysine = [E2 ubiquitin-conjugating enzyme]-L-cysteine + N(6)-ubiquitinyl-[acceptor protein]-L-lysine.. Binds free ubiquitin non-covalently via its RING-type zinc finger. Ubiquitin-binding leads to enhance the E3 ubiquitin-protein ligase activity by stabilizing the ubiquitin-conjugating enzyme E2 (donor ubiquitin) in the 'closed' conformation and activating ubiquitin transfer. E3 ubiquitin-protein ligase that acts as a regulator of motor axon elongation. Required for efficient motor axon extension in the dorsal forelimb by enhancing the transcriptional responses of the SMAD1/SMAD5/SMAD8 effectors, which are activated downstream of BMP. Acts by mediating ubiquitination and degradation of SMAD inhibitors such as SMAD6, SMAD7, SKI and SNON isoform of SKIL. This is E3 ubiquitin-protein ligase ARK2C from Homo sapiens (Human).